Reading from the N-terminus, the 144-residue chain is Large ribosomal subunit protein uL13 (144 aa).

The disordered stretch occupies residues 125–144 (YRGPEHPHQAQKPQPLEVKA).

The protein belongs to the universal ribosomal protein uL13 family. Part of the 50S ribosomal subunit.

Its function is as follows. This protein is one of the early assembly proteins of the 50S ribosomal subunit, although it is not seen to bind rRNA by itself. It is important during the early stages of 50S assembly. The chain is Large ribosomal subunit protein uL13 from Aquifex aeolicus (strain VF5).